Reading from the N-terminus, the 166-residue chain is uncharacterized protein (166 aa).

2 stretches are compositionally biased toward gly residues: residues 1–10 (MNYGNNGGGQ) and 76–86 (YRGGGGGGGGN). A disordered region spans residues 1-117 (MNYGNNGGGQ…GGGNKNFGPI (117 aa)).

This is an uncharacterized protein from Caenorhabditis elegans.